Consider the following 706-residue polypeptide: Centrosomal protein kizuna (706 aa).

The stretch at 63-113 forms a coiled coil; that stretch reads QRAKTRNLELLGNVENLASKLKEFSIDCSRLLQKRMEYKNHITRLKKDRRK. The segment covering 105–116 has biased composition (basic residues); sequence TRLKKDRRKMGS. Disordered regions lie at residues 105–184, 215–347, 571–603, 620–665, and 677–706; these read TRLK…LCMH, VREK…ASRG, EIKPARPSGTNAQTGEEQEIQSAEEDSADQSPV, SVAQ…KTKP, and ESDDSNSEIEMALRPQSCNTSSHDFDDFYD. The span at 118–127 shows a compositional bias: basic and acidic residues; sequence GKSEADEHPS. Composition is skewed to polar residues over residues 128–156 and 164–180; these read RLSTQGLSQSAAIFMGHQTSNGSSRNDGA and HTEQIPNHPSLPPSQSG. Residues 215-251 are compositionally biased toward basic and acidic residues; sequence VREKQMESDWDISQRAREQQRQEELKSPHTTLKEAEV. The span at 272-283 shows a compositional bias: low complexity; the sequence is TRSPSPDTTDPS. The span at 293–304 shows a compositional bias: acidic residues; that stretch reads GEDEEESAEDKD. Residues 308-320 are compositionally biased toward polar residues; it reads PINQNHSDYTSNI. A compositionally biased stretch (acidic residues) spans 586–598; sequence EEQEIQSAEEDSA. A compositionally biased stretch (basic and acidic residues) spans 638 to 648; that stretch reads PDAHKLEKPEV.

Belongs to the kizuna family.

It localises to the cytoplasm. The protein resides in the cytoskeleton. It is found in the microtubule organizing center. The protein localises to the centrosome. Its subcellular location is the cilium basal body. Centrosomal protein required for establishing a robust mitotic centrosome architecture that can endure the forces that converge on the centrosomes during spindle formation. Required for stabilizing the expanded pericentriolar material around the centriole. The sequence is that of Centrosomal protein kizuna (kiz) from Danio rerio (Zebrafish).